Here is a 225-residue protein sequence, read N- to C-terminus: 2-phytyl-1,4-naphtoquinone methyltransferase (225 aa).

The protein belongs to the class I-like SAM-binding methyltransferase superfamily. MenG/UbiE family.

The enzyme catalyses demethylphylloquinol + S-adenosyl-L-methionine = phylloquinol + S-adenosyl-L-homocysteine + H(+). Its pathway is cofactor biosynthesis; phylloquinone biosynthesis. In terms of biological role, methyltransferase required for the conversion of 2-phytyl-1,4-beta-naphthoquinol to phylloquinol. The protein is 2-phytyl-1,4-naphtoquinone methyltransferase of Thermosynechococcus vestitus (strain NIES-2133 / IAM M-273 / BP-1).